The chain runs to 104 residues: Putative arsenate reductase (104 aa).

Cysteine 12 is an active-site residue.

Belongs to the ArsC family.

It carries out the reaction [glutaredoxin]-dithiol + arsenate + glutathione + H(+) = glutathionyl-S-S-[glutaredoxin] + arsenite + H2O. Functionally, reduction of arsenate [As(V)] to arsenite [As(III)]. This protein expands the substrate specificity of ArsAB pump which can extrude arsenite and antimonite to allow for arsenate pumping and resistance. The protein is Putative arsenate reductase (yfjU) of Escherichia coli (strain K12).